A 189-amino-acid chain; its full sequence is Peptidyl-tRNA hydrolase (189 aa).

Position 14 (tyrosine 14) interacts with tRNA. The Proton acceptor role is filled by histidine 19. 3 residues coordinate tRNA: tyrosine 64, asparagine 66, and asparagine 112.

It belongs to the PTH family. In terms of assembly, monomer.

The protein localises to the cytoplasm. It carries out the reaction an N-acyl-L-alpha-aminoacyl-tRNA + H2O = an N-acyl-L-amino acid + a tRNA + H(+). In terms of biological role, hydrolyzes ribosome-free peptidyl-tRNAs (with 1 or more amino acids incorporated), which drop off the ribosome during protein synthesis, or as a result of ribosome stalling. Catalyzes the release of premature peptidyl moieties from peptidyl-tRNA molecules trapped in stalled 50S ribosomal subunits, and thus maintains levels of free tRNAs and 50S ribosomes. This Dehalococcoides mccartyi (strain ATCC BAA-2100 / JCM 16839 / KCTC 5957 / BAV1) protein is Peptidyl-tRNA hydrolase.